The chain runs to 220 residues: Ribosome maturation factor RimP (220 aa).

Residues 1 to 15 (MSQRGRATRPTGPTG) are compositionally biased toward low complexity. Disordered regions lie at residues 1 to 35 (MSQR…GGDL) and 184 to 220 (PGRV…GEER). Positions 198–220 (DGADGADEAGDFDDDDDVEGEER) are enriched in acidic residues.

The protein belongs to the RimP family.

It is found in the cytoplasm. Its function is as follows. Required for maturation of 30S ribosomal subunits. In Salinispora tropica (strain ATCC BAA-916 / DSM 44818 / JCM 13857 / NBRC 105044 / CNB-440), this protein is Ribosome maturation factor RimP.